Reading from the N-terminus, the 180-residue chain is Large ribosomal subunit protein uL5 (180 aa).

The protein belongs to the universal ribosomal protein uL5 family. Part of the 50S ribosomal subunit; part of the 5S rRNA/L5/L18/L25 subcomplex. Contacts the 5S rRNA and the P site tRNA. Forms a bridge to the 30S subunit in the 70S ribosome.

In terms of biological role, this is one of the proteins that bind and probably mediate the attachment of the 5S RNA into the large ribosomal subunit, where it forms part of the central protuberance. In the 70S ribosome it contacts protein S13 of the 30S subunit (bridge B1b), connecting the 2 subunits; this bridge is implicated in subunit movement. Contacts the P site tRNA; the 5S rRNA and some of its associated proteins might help stabilize positioning of ribosome-bound tRNAs. The chain is Large ribosomal subunit protein uL5 from Mycoplasma mycoides subsp. mycoides SC (strain CCUG 32753 / NCTC 10114 / PG1).